Here is a 768-residue protein sequence, read N- to C-terminus: Polyadenylate-binding protein, cytoplasmic and nuclear (768 aa).

A compositionally biased stretch (polar residues) spans 1–11; it reads MSAETATNPPV. Residues 1–52 form a disordered region; that stretch reads MSAETATNPPVDTTPGAAPESATNGSNANVAADTTAGEASQTTSSTTPTAQP. The segment covering 39–52 has biased composition (low complexity); that stretch reads ASQTTSSTTPTAQP. 4 RRM domains span residues 55–133, 143–220, 236–314, and 340–470; these read ASLY…WSQR, GNVF…HHIA, TNVY…RAQK, and VNLY…LAQR. Disordered stretches follow at residues 374–428, 633–662, and 739–768; these read DFAP…EKKP, QQGM…NASP, and KNKG…ETKS. Over residues 637–646 the composition is skewed to gly residues; it reads GRPGQAGRGQ. The region spanning 662-739 is the PABC domain; that stretch reads PNGLTLQVLN…ALTVYDEYVK (78 aa). The span at 753–768 shows a compositional bias: basic and acidic residues; sequence NKSKDASQETAEETKS.

It belongs to the polyadenylate-binding protein type-1 family.

It localises to the cytoplasm. Its subcellular location is the nucleus. Binds the poly(A) tail of mRNA. Appears to be an important mediator of the multiple roles of the poly(A) tail in mRNA biogenesis, stability and translation. In the nucleus, involved in both mRNA cleavage and polyadenylation. Is also required for efficient mRNA export to the cytoplasm. Acts in concert with a poly(A)-specific nuclease (PAN) to affect poly(A) tail shortening, which may occur concomitantly with either nucleocytoplasmic mRNA transport or translational initiation. In the cytoplasm, stimulates translation initiation and regulates mRNA decay through translation termination-coupled poly(A) shortening, probably mediated by PAN. In Coccidioides immitis (strain RS) (Valley fever fungus), this protein is Polyadenylate-binding protein, cytoplasmic and nuclear (PAB1).